The following is a 201-amino-acid chain: Holliday junction branch migration complex subunit RuvA (201 aa).

Residues 1–64 form a domain I region; the sequence is MIGFIRGLLV…EDAHSLFGFG (64 aa). The segment at 65–143 is domain II; sequence TEAERGLFRS…IGVPSLAPAS (79 aa). A flexible linker region spans residues 144-153; it reads FAGGAAPLPA. Residues 153–201 form a domain III region; it reads AADPADEAVSALIALGFKPQEANTLVARQAAEGRSAEDLIRAALQSAVR.

It belongs to the RuvA family. As to quaternary structure, homotetramer. Forms an RuvA(8)-RuvB(12)-Holliday junction (HJ) complex. HJ DNA is sandwiched between 2 RuvA tetramers; dsDNA enters through RuvA and exits via RuvB. An RuvB hexamer assembles on each DNA strand where it exits the tetramer. Each RuvB hexamer is contacted by two RuvA subunits (via domain III) on 2 adjacent RuvB subunits; this complex drives branch migration. In the full resolvosome a probable DNA-RuvA(4)-RuvB(12)-RuvC(2) complex forms which resolves the HJ.

It is found in the cytoplasm. Its function is as follows. The RuvA-RuvB-RuvC complex processes Holliday junction (HJ) DNA during genetic recombination and DNA repair, while the RuvA-RuvB complex plays an important role in the rescue of blocked DNA replication forks via replication fork reversal (RFR). RuvA specifically binds to HJ cruciform DNA, conferring on it an open structure. The RuvB hexamer acts as an ATP-dependent pump, pulling dsDNA into and through the RuvAB complex. HJ branch migration allows RuvC to scan DNA until it finds its consensus sequence, where it cleaves and resolves the cruciform DNA. This chain is Holliday junction branch migration complex subunit RuvA, found in Methylococcus capsulatus (strain ATCC 33009 / NCIMB 11132 / Bath).